Reading from the N-terminus, the 472-residue chain is Eukaryotic translation initiation factor 2 subunit 3 (472 aa).

Alanine 2 bears the N-acetylalanine mark. Serine 16 carries the phosphoserine modification. The tr-type G domain occupies 39 to 248 (QATINIGTIG…IVKKIPVPPR (210 aa)). Positions 48-55 (GHVAHGKS) are G1. Position 51 to 56 (51 to 56 (AHGKST)) interacts with GTP. Residues 76–80 (NITIK) form a G2 region. The tract at residues 134 to 137 (DCPG) is G3. GTP contacts are provided by residues 190–193 (NKID) and 225–227 (SAQ). A G4 region spans residues 190 to 193 (NKID). The tract at residues 225–227 (SAQ) is G5. Positions 457-469 (GQIRRGVTIKPTV) are interacts with CDC123.

Belongs to the TRAFAC class translation factor GTPase superfamily. Classic translation factor GTPase family. EIF2G subfamily. As to quaternary structure, eukaryotic translation initiation factor 2 eIF2 is a heterotrimeric complex composed of an alpha (EIF2S1), a beta (EIF2S2) and a gamma (EIF2S3) chain. eIF2 is member of the 43S pre-initiation complex (43S PIC). Interacts (via C-terminus) with CDC123; the interaction is direct.

It localises to the cytoplasm. It is found in the cytosol. The enzyme catalyses GTP + H2O = GDP + phosphate + H(+). In terms of biological role, member of the eIF2 complex that functions in the early steps of protein synthesis by forming a ternary complex with GTP and initiator tRNA. This complex binds to a 40S ribosomal subunit, followed by mRNA binding to form the 43S pre-initiation complex (43S PIC). Junction of the 60S ribosomal subunit to form the 80S initiation complex is preceded by hydrolysis of the GTP bound to eIF2 and release of an eIF2-GDP binary complex. In order for eIF2 to recycle and catalyze another round of initiation, the GDP bound to eIF2 must exchange with GTP by way of a reaction catalyzed by eIF-2B. The protein is Eukaryotic translation initiation factor 2 subunit 3 (EIF2S3) of Pongo abelii (Sumatran orangutan).